The primary structure comprises 171 residues: Protein-export protein SecB (171 aa).

This sequence belongs to the SecB family. Homotetramer, a dimer of dimers. One homotetramer interacts with 1 SecA dimer.

It localises to the cytoplasm. Its function is as follows. One of the proteins required for the normal export of preproteins out of the cell cytoplasm. It is a molecular chaperone that binds to a subset of precursor proteins, maintaining them in a translocation-competent state. It also specifically binds to its receptor SecA. The sequence is that of Protein-export protein SecB from Gluconacetobacter diazotrophicus (strain ATCC 49037 / DSM 5601 / CCUG 37298 / CIP 103539 / LMG 7603 / PAl5).